The sequence spans 122 residues: Large ribosomal subunit protein uL14 (122 aa).

This sequence belongs to the universal ribosomal protein uL14 family. As to quaternary structure, part of the 50S ribosomal subunit. Forms a cluster with proteins L3 and L19. In the 70S ribosome, L14 and L19 interact and together make contacts with the 16S rRNA in bridges B5 and B8.

Its function is as follows. Binds to 23S rRNA. Forms part of two intersubunit bridges in the 70S ribosome. This is Large ribosomal subunit protein uL14 from Methylobacillus flagellatus (strain ATCC 51484 / DSM 6875 / VKM B-1610 / KT).